A 189-amino-acid chain; its full sequence is Stathmin-4 (189 aa).

2 S-palmitoyl cysteine lipidation sites follow: C20 and C22. In terms of domain architecture, SLD spans 48–189; the sequence is SDMEVIELNK…NKELKEEASR (142 aa). E54 and S90 each carry phosphoserine. The stretch at 90–189 forms a coiled coil; that stretch reads SLEEIQKKLE…NKELKEEASR (100 aa). A disordered region spans residues 168 to 189; the sequence is QEKDKHAEEVRKNKELKEEASR.

This sequence belongs to the stathmin family. Nervous tissue.

The protein localises to the golgi apparatus. It is found in the cell projection. Its subcellular location is the growth cone. The protein resides in the axon. In terms of biological role, exhibits microtubule-destabilizing activity. This is Stathmin-4 (Stmn4) from Rattus norvegicus (Rat).